The following is a 479-amino-acid chain: ATP-dependent protease ATPase subunit HslU (479 aa).

Residues isoleucine 32, 74–79 (GVGKTE), aspartate 290, glutamate 355, and arginine 427 contribute to the ATP site.

It belongs to the ClpX chaperone family. HslU subfamily. A double ring-shaped homohexamer of HslV is capped on each side by a ring-shaped HslU homohexamer. The assembly of the HslU/HslV complex is dependent on binding of ATP.

It localises to the cytoplasm. ATPase subunit of a proteasome-like degradation complex; this subunit has chaperone activity. The binding of ATP and its subsequent hydrolysis by HslU are essential for unfolding of protein substrates subsequently hydrolyzed by HslV. HslU recognizes the N-terminal part of its protein substrates and unfolds these before they are guided to HslV for hydrolysis. The chain is ATP-dependent protease ATPase subunit HslU from Leptospira interrogans serogroup Icterohaemorrhagiae serovar copenhageni (strain Fiocruz L1-130).